We begin with the raw amino-acid sequence, 592 residues long: Alanine aminotransferase, mitochondrial (592 aa).

Residues 1–64 constitute a mitochondrion transit peptide; sequence MLSLSAKNHF…RKVRPVLQRH (64 aa). Ser-77 carries the phosphoserine modification. Pyridoxal 5'-phosphate contacts are provided by Ala-258, Ser-259, Tyr-284, Asn-340, and Ser-409. N6-(pyridoxal phosphate)lysine is present on Lys-412. Pyridoxal 5'-phosphate is bound at residue Arg-421.

The protein belongs to the class-I pyridoxal-phosphate-dependent aminotransferase family. Alanine aminotransferase subfamily. As to quaternary structure, homodimer. It depends on pyridoxal 5'-phosphate as a cofactor.

It localises to the mitochondrion matrix. It carries out the reaction L-alanine + 2-oxoglutarate = pyruvate + L-glutamate. The protein operates within amino-acid degradation; L-alanine degradation via transaminase pathway; pyruvate from L-alanine: step 1/1. Alanine aminotransferase involved in both alanine biosynthesis and utilization. Under respiratory conditions, constitutes the sole pathway for alanine biosynthesis and catabolism. Under fermentative conditions, it plays a catabolic role and alanine is mainly synthesized through an alternative pathway. This Saccharomyces cerevisiae (strain ATCC 204508 / S288c) (Baker's yeast) protein is Alanine aminotransferase, mitochondrial (ALT1).